The primary structure comprises 576 residues: Sulfite reductase [NADPH] hemoprotein beta-component (576 aa).

The [4Fe-4S] cluster site is built by cysteine 439, cysteine 445, cysteine 485, and cysteine 489. Cysteine 489 is a binding site for siroheme.

The protein belongs to the nitrite and sulfite reductase 4Fe-4S domain family. Alpha(8)-beta(8). The alpha component is a flavoprotein, the beta component is a hemoprotein. It depends on siroheme as a cofactor. The cofactor is [4Fe-4S] cluster.

The enzyme catalyses hydrogen sulfide + 3 NADP(+) + 3 H2O = sulfite + 3 NADPH + 4 H(+). The protein operates within sulfur metabolism; hydrogen sulfide biosynthesis; hydrogen sulfide from sulfite (NADPH route): step 1/1. In terms of biological role, component of the sulfite reductase complex that catalyzes the 6-electron reduction of sulfite to sulfide. This is one of several activities required for the biosynthesis of L-cysteine from sulfate. This is Sulfite reductase [NADPH] hemoprotein beta-component from Aliivibrio salmonicida (strain LFI1238) (Vibrio salmonicida (strain LFI1238)).